A 560-amino-acid chain; its full sequence is MKKVLNKYSRRLTEDKSQGASQAMLYGTGMNDADMHKPQIGIGSVWYEGNTCNMHLNQLAQFVKDSVEKENLKGMRFNTIGVSDGISMGTDGMSYSLQSRDLIADSIETVMSAHWYDGLISIPGCDKNMPGCMMALGRLNRPGFVIYGGTIQAGVMRGKPIDIVTAFQSYGACLSGQITEQERQETIKKACPGAGACGGMYTANTMACAIEALGMSLPFSSSTPATSVEKVQECDKAGETIKNLLELDIKPRDIMTRKAFENAMVLITVMGGSTNAVLHLLAMASSVDVDLSIDDFQEIANKTPVLADFKPSGKYVMADLHAIGGTPAVMKMLLKAGMLHGDCLTVTGKTLAENLENVADLPEDNTIIHKLDNPIKKTGHLQILKGNVAPEGSVAKITGKEGEVFEGVANVFDSEEEMVAAVEEGKVKKGDVIVIRYEGPKGGPGMPEMLKPTSLIMGAGLGQDVALITDGRFSGGSHGFIVGHIAPEAYEGGMIALLENGDKITIDAINNVINVDLSDQEIAQRKSKWRAPKQKASRGTLKKYIKTVSSASTGCVTDLD.

Cys-52 is a binding site for [2Fe-2S] cluster. Residue Asp-84 participates in Mg(2+) binding. Cys-125 lines the [2Fe-2S] cluster pocket. Positions 126 and 127 each coordinate Mg(2+). Lys-127 is subject to N6-carboxylysine. Cys-197 provides a ligand contact to [2Fe-2S] cluster. Glu-448 is a Mg(2+) binding site. Ser-474 functions as the Proton acceptor in the catalytic mechanism.

The protein belongs to the IlvD/Edd family. Homodimer. The cofactor is [2Fe-2S] cluster. Mg(2+) is required as a cofactor.

The catalysed reaction is (2R)-2,3-dihydroxy-3-methylbutanoate = 3-methyl-2-oxobutanoate + H2O. The enzyme catalyses (2R,3R)-2,3-dihydroxy-3-methylpentanoate = (S)-3-methyl-2-oxopentanoate + H2O. It participates in amino-acid biosynthesis; L-isoleucine biosynthesis; L-isoleucine from 2-oxobutanoate: step 3/4. Its pathway is amino-acid biosynthesis; L-valine biosynthesis; L-valine from pyruvate: step 3/4. Its function is as follows. Functions in the biosynthesis of branched-chain amino acids. Catalyzes the dehydration of (2R,3R)-2,3-dihydroxy-3-methylpentanoate (2,3-dihydroxy-3-methylvalerate) into 2-oxo-3-methylpentanoate (2-oxo-3-methylvalerate) and of (2R)-2,3-dihydroxy-3-methylbutanoate (2,3-dihydroxyisovalerate) into 2-oxo-3-methylbutanoate (2-oxoisovalerate), the penultimate precursor to L-isoleucine and L-valine, respectively. This is Dihydroxy-acid dehydratase from Francisella tularensis subsp. novicida (strain U112).